The following is a 197-amino-acid chain: ATP-dependent Clp protease proteolytic subunit (197 aa).

The active-site Nucleophile is the Ser98. His123 is a catalytic residue.

It belongs to the peptidase S14 family. As to quaternary structure, fourteen ClpP subunits assemble into 2 heptameric rings which stack back to back to give a disk-like structure with a central cavity, resembling the structure of eukaryotic proteasomes.

It is found in the cytoplasm. The catalysed reaction is Hydrolysis of proteins to small peptides in the presence of ATP and magnesium. alpha-casein is the usual test substrate. In the absence of ATP, only oligopeptides shorter than five residues are hydrolyzed (such as succinyl-Leu-Tyr-|-NHMec, and Leu-Tyr-Leu-|-Tyr-Trp, in which cleavage of the -Tyr-|-Leu- and -Tyr-|-Trp bonds also occurs).. In terms of biological role, cleaves peptides in various proteins in a process that requires ATP hydrolysis. Has a chymotrypsin-like activity. Plays a major role in the degradation of misfolded proteins. The sequence is that of ATP-dependent Clp protease proteolytic subunit from Ligilactobacillus salivarius (strain UCC118) (Lactobacillus salivarius).